We begin with the raw amino-acid sequence, 215 residues long: Ribonuclease S-6 (215 aa).

Residues 1–22 form the signal peptide; sequence MFNLPLTSVFVIFLFALSPIYG. Gln32 serves as a coordination point for RNA. The cysteines at positions 38 and 43 are disulfide-linked. Asn49 carries an N-linked (GlcNAc...) asparagine glycan. Position 53 (His53) interacts with RNA. His53 functions as the Proton donor in the catalytic mechanism. The N-linked (GlcNAc...) asparagine glycan is linked to Asn59. Residues Cys67 and Cys116 are joined by a disulfide bond. Residues 91–92, Arg94, Phe105, 108–109, and 112–113 each bind RNA; these read DL, RE, and KH. Glu109 is a catalytic residue. Catalysis depends on His113, which acts as the Proton acceptor. Asn160 and Asn172 each carry an N-linked (GlcNAc...) asparagine glycan. Intrachain disulfides connect Cys175-Cys204 and Cys187-Cys198.

Belongs to the RNase T2 family.

Its subcellular location is the secreted. It is found in the extracellular space. The enzyme catalyses a ribonucleotidyl-ribonucleotide-RNA + H2O = a 3'-end 3'-phospho-ribonucleotide-RNA + a 5'-end dephospho-ribonucleoside-RNA + H(+). In terms of biological role, self-incompatibility (SI) is the inherited ability of a flowering plant to prevent self-fertilization by discriminating between self and non-self pollen during pollination. In many species of the Solanaceae, self-incompatibility is controlled by the single, multiallelic locus S. This stylar glycoprotein is associated with expression of self-incompatibility in potato. The polypeptide is Ribonuclease S-6 (Nicotiana alata (Winged tobacco)).